We begin with the raw amino-acid sequence, 302 residues long: 33 kDa chaperonin (302 aa).

Cystine bridges form between cysteine 247/cysteine 249 and cysteine 280/cysteine 283.

The protein belongs to the HSP33 family. Under oxidizing conditions two disulfide bonds are formed involving the reactive cysteines. Under reducing conditions zinc is bound to the reactive cysteines and the protein is inactive.

The protein resides in the cytoplasm. Redox regulated molecular chaperone. Protects both thermally unfolding and oxidatively damaged proteins from irreversible aggregation. Plays an important role in the bacterial defense system toward oxidative stress. This Prochlorococcus marinus (strain AS9601) protein is 33 kDa chaperonin.